The sequence spans 288 residues: UDP-3-O-acyl-N-acetylglucosamine deacetylase (288 aa).

Residues H79, H236, and D240 each contribute to the Zn(2+) site. H263 acts as the Proton donor in catalysis.

It belongs to the LpxC family. Requires Zn(2+) as cofactor.

It catalyses the reaction a UDP-3-O-[(3R)-3-hydroxyacyl]-N-acetyl-alpha-D-glucosamine + H2O = a UDP-3-O-[(3R)-3-hydroxyacyl]-alpha-D-glucosamine + acetate. Its pathway is glycolipid biosynthesis; lipid IV(A) biosynthesis; lipid IV(A) from (3R)-3-hydroxytetradecanoyl-[acyl-carrier-protein] and UDP-N-acetyl-alpha-D-glucosamine: step 2/6. Its function is as follows. Catalyzes the hydrolysis of UDP-3-O-myristoyl-N-acetylglucosamine to form UDP-3-O-myristoylglucosamine and acetate, the committed step in lipid A biosynthesis. This Rickettsia conorii (strain ATCC VR-613 / Malish 7) protein is UDP-3-O-acyl-N-acetylglucosamine deacetylase.